Here is a 785-residue protein sequence, read N- to C-terminus: Endonuclease MutS2 (785 aa).

332–339 (GPNTGGKT) lines the ATP pocket. A Smr domain is found at 710–785 (IDLRGLDAEE…GDGATIVELK (76 aa)).

It belongs to the DNA mismatch repair MutS family. MutS2 subfamily. As to quaternary structure, homodimer. Binds to stalled ribosomes, contacting rRNA.

In terms of biological role, endonuclease that is involved in the suppression of homologous recombination and thus may have a key role in the control of bacterial genetic diversity. Functionally, acts as a ribosome collision sensor, splitting the ribosome into its 2 subunits. Detects stalled/collided 70S ribosomes which it binds and splits by an ATP-hydrolysis driven conformational change. Acts upstream of the ribosome quality control system (RQC), a ribosome-associated complex that mediates the extraction of incompletely synthesized nascent chains from stalled ribosomes and their subsequent degradation. Probably generates substrates for RQC. The chain is Endonuclease MutS2 from Clostridium botulinum (strain Eklund 17B / Type B).